A 302-amino-acid chain; its full sequence is Bifunctional protein FolD (302 aa).

Residues 171 to 173, S196, and I237 each bind NADP(+); that span reads GRS.

Belongs to the tetrahydrofolate dehydrogenase/cyclohydrolase family. Homodimer.

It carries out the reaction (6R)-5,10-methylene-5,6,7,8-tetrahydrofolate + NADP(+) = (6R)-5,10-methenyltetrahydrofolate + NADPH. The enzyme catalyses (6R)-5,10-methenyltetrahydrofolate + H2O = (6R)-10-formyltetrahydrofolate + H(+). Its pathway is one-carbon metabolism; tetrahydrofolate interconversion. In terms of biological role, catalyzes the oxidation of 5,10-methylenetetrahydrofolate to 5,10-methenyltetrahydrofolate and then the hydrolysis of 5,10-methenyltetrahydrofolate to 10-formyltetrahydrofolate. This is Bifunctional protein FolD from Sphingopyxis alaskensis (strain DSM 13593 / LMG 18877 / RB2256) (Sphingomonas alaskensis).